Reading from the N-terminus, the 156-residue chain is Enhancer of split M1 protein (156 aa).

Positions 1–19 are cleaved as a signal peptide; it reads MMSQTLTLCCLGLVACVYG. 2 consecutive Kazal-like domains span residues 23–81 and 96–156; these read STND…AWCS and KLEV…EEKC. 5 cysteine pairs are disulfide-bonded: Cys29–Cys62, Cys33–Cys55, Cys102–Cys135, Cys106–Cys128, and Cys114–Cys156.

The chain is Enhancer of split M1 protein from Drosophila simulans (Fruit fly).